A 364-amino-acid polypeptide reads, in one-letter code: Spermidine/putrescine import ATP-binding protein PotA (364 aa).

An ABC transporter domain is found at 5–235; that stretch reads LSFKSVSKQY…PVNRFVADFI (231 aa). 37-44 contributes to the ATP binding site; the sequence is GPSGCGKT.

It belongs to the ABC transporter superfamily. Spermidine/putrescine importer (TC 3.A.1.11.1) family. As to quaternary structure, the complex is composed of two ATP-binding proteins (PotA), two transmembrane proteins (PotB and PotC) and a solute-binding protein (PotD).

The protein resides in the cell membrane. The enzyme catalyses ATP + H2O + polyamine-[polyamine-binding protein]Side 1 = ADP + phosphate + polyamineSide 2 + [polyamine-binding protein]Side 1.. In terms of biological role, part of the ABC transporter complex PotABCD involved in spermidine/putrescine import. Responsible for energy coupling to the transport system. This chain is Spermidine/putrescine import ATP-binding protein PotA, found in Staphylococcus saprophyticus subsp. saprophyticus (strain ATCC 15305 / DSM 20229 / NCIMB 8711 / NCTC 7292 / S-41).